Here is a 124-residue protein sequence, read N- to C-terminus: Holo-[acyl-carrier-protein] synthase (124 aa).

Mg(2+) is bound by residues Asp-8 and Glu-60.

The protein belongs to the P-Pant transferase superfamily. AcpS family. It depends on Mg(2+) as a cofactor.

It localises to the cytoplasm. It carries out the reaction apo-[ACP] + CoA = holo-[ACP] + adenosine 3',5'-bisphosphate + H(+). Its function is as follows. Transfers the 4'-phosphopantetheine moiety from coenzyme A to a Ser of acyl-carrier-protein. The chain is Holo-[acyl-carrier-protein] synthase from Wolbachia pipientis subsp. Culex pipiens (strain wPip).